A 621-amino-acid polypeptide reads, in one-letter code: Kelch-like protein 40 (621 aa).

The BTB domain maps to 33-98; that stretch reads LDCVVRVGER…LYTSEIALDE (66 aa). The 107-residue stretch at 133 to 239 folds into the BACK domain; it reads CLAVFRLGLL…PRAFLETRVE (107 aa). The disordered stretch occupies residues 265–298; it reads LTTLRKKKKEKGEQTARAKEANQGTEDTKAEDDE. The span at 274 to 284 shows a compositional bias: basic and acidic residues; that stretch reads EKGEQTARAKE. Kelch repeat units follow at residues 360 to 412, 413 to 462, 463 to 510, 512 to 557, and 559 to 613; these read QVFV…EALN, AIYV…SHMD, LVYV…VHDG, IFVA…SLAG, and LYAL…PVRL.

Belongs to the KLHL40 family. As to quaternary structure, component of the BCR(KLHL40) E3 ubiquitin ligase complex, at least composed of CUL3, KLHL40 and RBX1. Interacts with LMOD3. As to expression, specifically expressed in skeletal muscles in embryonic, neonatal and adults. Expressed in various types of muscles, including extensor digitorum longus, gastrocnemius, soleus, diaphragm, masseter and heart (at protein level). Not detected in brain, liver and lung (at protein level).

It is found in the cytoplasm. It localises to the myofibril. Its subcellular location is the sarcomere. The protein localises to the a band. The protein resides in the i band. Its function is as follows. Substrate-specific adapter of a BCR (BTB-CUL3-RBX1) E3 ubiquitin ligase complex that acts as a key regulator of skeletal muscle development. The BCR(KLHL40) complex acts by mediating ubiquitination and degradation of TFDP1, thereby regulating the activity of the E2F:DP transcription factor complex. Promotes stabilization of LMOD3 by acting as a negative regulator of LMOD3 ubiquitination; the molecular process by which it negatively regulates ubiquitination of LMOD3 is however unclear. This is Kelch-like protein 40 from Mus musculus (Mouse).